A 352-amino-acid polypeptide reads, in one-letter code: Phosphoribosylformylglycinamidine cyclo-ligase (352 aa).

It belongs to the AIR synthase family.

Its subcellular location is the cytoplasm. The enzyme catalyses 2-formamido-N(1)-(5-O-phospho-beta-D-ribosyl)acetamidine + ATP = 5-amino-1-(5-phospho-beta-D-ribosyl)imidazole + ADP + phosphate + H(+). The protein operates within purine metabolism; IMP biosynthesis via de novo pathway; 5-amino-1-(5-phospho-D-ribosyl)imidazole from N(2)-formyl-N(1)-(5-phospho-D-ribosyl)glycinamide: step 2/2. The chain is Phosphoribosylformylglycinamidine cyclo-ligase from Nitrosospira multiformis (strain ATCC 25196 / NCIMB 11849 / C 71).